We begin with the raw amino-acid sequence, 761 residues long: Translation initiation factor IF-2 (761 aa).

The tract at residues 39–179 is disordered; that stretch reads DEETLNKAKQ…KVNHQQMPLP (141 aa). Low complexity predominate over residues 45 to 105; that stretch reads KAKQAGKPAA…NNQQSQSQGQ (61 aa). Positions 106–120 are enriched in polar residues; it reads TKRPSQASNNQSGAA. Over residues 142–154 the composition is skewed to low complexity; that stretch reads PGSNNRRPGNNQN. The segment covering 155–168 has biased composition (basic residues); it reads RRNHGNRGGKRRPQ. The tr-type G domain maps to 262 to 435; it reads ERPPVVTIMG…EVEEFKANPD (174 aa). Residues 271-278 are G1; the sequence is GHVDHGKT. 271–278 lines the GTP pocket; it reads GHVDHGKT. The tract at residues 296 to 300 is G2; the sequence is GITQH. A G3 region spans residues 317 to 320; sequence DTPG. GTP contacts are provided by residues 317-321 and 371-374; these read DTPGH and NKID. The segment at 371-374 is G4; the sequence is NKID. A G5 region spans residues 407–409; it reads SAL.

Belongs to the TRAFAC class translation factor GTPase superfamily. Classic translation factor GTPase family. IF-2 subfamily.

It is found in the cytoplasm. In terms of biological role, one of the essential components for the initiation of protein synthesis. Protects formylmethionyl-tRNA from spontaneous hydrolysis and promotes its binding to the 30S ribosomal subunits. Also involved in the hydrolysis of GTP during the formation of the 70S ribosomal complex. The polypeptide is Translation initiation factor IF-2 (Shouchella clausii (strain KSM-K16) (Alkalihalobacillus clausii)).